A 290-amino-acid polypeptide reads, in one-letter code: Fructose-1,6-bisphosphatase class 1 (290 aa).

Mg(2+) contacts are provided by Glu-78, Asp-96, Leu-98, and Asp-99. Residues 99–102 (DGSS), Tyr-201, and Lys-226 contribute to the substrate site. Glu-232 serves as a coordination point for Mg(2+).

The protein belongs to the FBPase class 1 family. In terms of assembly, homotetramer. Mg(2+) serves as cofactor.

The protein localises to the cytoplasm. It catalyses the reaction beta-D-fructose 1,6-bisphosphate + H2O = beta-D-fructose 6-phosphate + phosphate. It participates in carbohydrate biosynthesis; gluconeogenesis. The sequence is that of Fructose-1,6-bisphosphatase class 1 from Helicobacter pylori (strain J99 / ATCC 700824) (Campylobacter pylori J99).